Reading from the N-terminus, the 2365-residue chain is Voltage-dependent T-type calcium channel subunit alpha-1H (2365 aa).

The segment at 1–63 (MTEGTLAADE…PGTECGADLG (63 aa)) is disordered. The Cytoplasmic segment spans residues 1-100 (MTEGTLAADE…SWCLRLVSRR (100 aa)). Low complexity predominate over residues 16–36 (GASPSAPAAPVRASPASPGVP). The I repeat unit spans residues 87-422 (TRPRSWCLRL…LCLVVIATQF (336 aa)). A helical transmembrane segment spans residues 101 to 119 (WFEHISMLVIMLNCVTLGM). Residues 120 to 141 (FRPCEDVECRSERCSILEAFDD) lie on the Extracellular side of the membrane. Asp-140 serves as a coordination point for Zn(2+). A helical transmembrane segment spans residues 142–160 (FIFAFFAVEMVIKMVALGL). Residues 161-169 (FGQKCYLGD) lie on the Cytoplasmic side of the membrane. The helical transmembrane segment at 170 to 184 (TWNRLDFFIVMAGMM) threads the bilayer. Topologically, residues 185–193 (EYSLDGHNV) are extracellular. Residues Asp-189 and His-191 each coordinate Zn(2+). Asn-192 is a glycosylation site (N-linked (GlcNAc...) asparagine). Residues 194-212 (SLSAIRTVRVLRPLRAINR) traverse the membrane as a helical segment. Residues 213–232 (VPSMRILVTLLLDTLPMLGN) lie on the Cytoplasmic side of the membrane. The chain crosses the membrane as a helical span at residues 233–253 (VLLLCFFVFFIFGIVGVQLWA). The Extracellular portion of the chain corresponds to 254-394 (GLLRNRCFLD…YYVMDAHSFY (141 aa)). Asn-271 carries N-linked (GlcNAc...) asparagine glycosylation. Residues 395–419 (NFIYFILLIIVGSFFMINLCLVVIA) form a helical membrane-spanning segment. Residues 420-790 (TQFSETKQRE…SKLRRIVDSK (371 aa)) lie on the Cytoplasmic side of the membrane. Disordered stretches follow at residues 490 to 573 (VDPS…SESV), 618 to 656 (PSGA…SPSP), and 737 to 761 (GDCR…RWRP). Positions 500–532 (GPRRRPRRAGRRTASVHHLVYHHHHHHHHHYHF) are enriched in basic residues. Positions 557–566 (PPSPPSPGHG) are enriched in pro residues. Over residues 621-631 (AVNSKGSTSSR) the composition is skewed to polar residues. An II repeat occupies 776 to 1015 (WASFSSKLRR…LLVAILVEGF (240 aa)). Residues 791–811 (YFNRGIMAAILVNTLSMGVEY) form a helical membrane-spanning segment. Residues 812 to 824 (HEQPDELTNALEI) are Extracellular-facing. The chain crosses the membrane as a helical span at residues 825–846 (SNIVFTSMFALEMLLKLLACGP). The Cytoplasmic segment spans residues 847–852 (LGYIRN). Residues 853–871 (PYNIFDGIVVIISVWEIVG) form a helical membrane-spanning segment. Residues 872 to 879 (QADGGLSV) are Extracellular-facing. Residues 880–903 (LRTFRLLRVLKLVRFLPALRRQLV) form a helical membrane-spanning segment. The Cytoplasmic portion of the chain corresponds to 904 to 914 (VLMRTMDNVAT). The helical transmembrane segment at 915–935 (FCMLLMLFIFIFSILGMHLFG) threads the bilayer. Residues 936-987 (CKFSLKTDSGDTVPDRKNFDSLLWAIVTVFQILTQEDWNVVLYNGMASTSSW) lie on the Extracellular side of the membrane. Residues 988–1012 (AALYFVALMTFGNYVLFNLLVAILV) form a helical membrane-spanning segment. The Cytoplasmic segment spans residues 1013 to 1301 (EGFQAEGDAT…NRLRVSCQKV (289 aa)). The interval 1059-1215 (PNGHLEGRGS…HRSTMDLCPP (157 aa)) is disordered. Residues 1130–1147 (GPNSAGSSRRSSWNSLGR) show a composition bias toward low complexity. Basic and acidic residues predominate over residues 1199–1209 (RRAESLGHRST). The stretch at 1292-1569 (NRLRVSCQKV…MFVGVVVENF (278 aa)) is one III repeat. The chain crosses the membrane as a helical span at residues 1302-1324 (IAHKMFDHVVLVFIFLNCITIAL). The Extracellular segment spans residues 1325 to 1342 (ERPDIDPGSTERAFLSVS). A helical membrane pass occupies residues 1343–1363 (NYIFTAIFVVEMMVKVVALGL). Topologically, residues 1364 to 1373 (LWGEHAYLQS) are cytoplasmic. A helical membrane pass occupies residues 1374 to 1393 (SWNVLDGLLVLVSLVDIIVA). Over 1394–1407 (VASAGGAKILGVLR) the chain is Extracellular. The helical transmembrane segment at 1408-1429 (VLRLLRTLRPLRVISRAPGLKL) threads the bilayer. Residues 1430-1439 (VVETLISSLR) are Cytoplasmic-facing. A helical transmembrane segment spans residues 1440 to 1463 (PIGNIVLICCAFFIIFGILGVQLF). At 1464–1540 (KGKFYYCEGT…DQQPVQNHNP (77 aa)) the chain is on the extracellular side. Asn-1477 carries N-linked (GlcNAc...) asparagine glycosylation. Residues 1541–1566 (WMLLYFISFLLIVSFFVLNMFVGVVV) traverse the membrane as a helical segment. At 1567–1627 (ENFHKCRQHQ…RRSIHSLCTS (61 aa)) the chain is on the cytoplasmic side. Residues 1613 to 1874 (DYSHTRRSIH…VVVAVLMKHL (262 aa)) form an IV repeat. The helical transmembrane segment at 1628–1648 (HYLDLFITFIICLNVITMSME) threads the bilayer. Residues 1649–1662 (HYNQPKSLDEALKY) lie on the Extracellular side of the membrane. A helical membrane pass occupies residues 1663-1684 (CNYVFTIVFVFEAALKLVAFGF). Over 1685–1691 (RRFFKDR) the chain is Cytoplasmic. The helical transmembrane segment at 1692-1710 (WNQLDLAIVLLSIMGIALE) threads the bilayer. At 1711–1724 (EIEMNAALPINPTI) the chain is on the extracellular side. The helical transmembrane segment at 1725-1748 (IRIMRVLRIARVLKLLKMATGMRA) threads the bilayer. The Cytoplasmic portion of the chain corresponds to 1749 to 1762 (LLDTVVQALPQVGN). Residues 1763-1783 (LGLLFMLLFFIYAALGVELFG) traverse the membrane as a helical segment. Residues 1784–1846 (RLECSEDNPC…KHCLSYLPAL (63 aa)) lie on the Extracellular side of the membrane. The chain crosses the membrane as a helical span at residues 1847-1874 (SPVYFVTFVLVAQFVLVNVVVAVLMKHL). Residues 1875-2365 (EESNKEARED…APDDSGDEPV (491 aa)) are Cytoplasmic-facing. Composition is skewed to polar residues over residues 1897-1916 (QGST…TEPD) and 1967-1983 (VTSA…SFQV). Disordered stretches follow at residues 1897 to 1920 (QGST…TPNL), 1967 to 1999 (VTSA…PLCA), 2053 to 2264 (APLG…GERW), and 2321 to 2365 (ELSM…DEPV). The span at 2092–2102 (DDAEAADPADE) shows a compositional bias: acidic residues. Basic and acidic residues predominate over residues 2172 to 2187 (GDGHLESGEVRARASE).

Belongs to the calcium channel alpha-1 subunit (TC 1.A.1.11) family. CACNA1H subfamily. In terms of assembly, interacts (via N-terminal cytoplasmic domain) with STAC. In terms of processing, in response to raising of intracellular calcium, the T-type channels are activated by CaM-kinase II. As to expression, is highly expressed in lumbosacral and thoracolumbar dorsal root ganglion neurons.

The protein localises to the cell membrane. It catalyses the reaction Ca(2+)(in) = Ca(2+)(out). Functionally, voltage-sensitive calcium channel that gives rise to T-type calcium currents. T-type calcium channels belong to the 'low-voltage activated (LVA)' group. A particularity of this type of channel is an opening at quite negative potentials, and a voltage-dependent inactivation. T-type channels serve pacemaking functions in both central neurons and cardiac nodal cells and support calcium signaling in secretory cells and vascular smooth muscle. They may also be involved in the modulation of firing patterns of neurons. In the adrenal zona glomerulosa, participates in the signaling pathway leading to aldosterone production in response to either AGT/angiotensin II, or hyperkalemia. In Mus musculus (Mouse), this protein is Voltage-dependent T-type calcium channel subunit alpha-1H (Cacna1h).